Reading from the N-terminus, the 122-residue chain is UPF0102 protein XCV0816 (122 aa).

The protein belongs to the UPF0102 family.

This Xanthomonas euvesicatoria pv. vesicatoria (strain 85-10) (Xanthomonas campestris pv. vesicatoria) protein is UPF0102 protein XCV0816.